We begin with the raw amino-acid sequence, 355 residues long: 3-dehydroquinate synthase (355 aa).

NAD(+) contacts are provided by residues 69–74 (DGEQHK), 103–107 (GVIGD), 127–128 (TT), Lys140, Lys149, and 167–170 (TLQT). Residues Glu182, His245, and His262 each coordinate Zn(2+).

This sequence belongs to the sugar phosphate cyclases superfamily. Dehydroquinate synthase family. Co(2+) is required as a cofactor. Zn(2+) serves as cofactor. Requires NAD(+) as cofactor.

The protein localises to the cytoplasm. It carries out the reaction 7-phospho-2-dehydro-3-deoxy-D-arabino-heptonate = 3-dehydroquinate + phosphate. Its pathway is metabolic intermediate biosynthesis; chorismate biosynthesis; chorismate from D-erythrose 4-phosphate and phosphoenolpyruvate: step 2/7. In terms of biological role, catalyzes the conversion of 3-deoxy-D-arabino-heptulosonate 7-phosphate (DAHP) to dehydroquinate (DHQ). The chain is 3-dehydroquinate synthase from Pseudoalteromonas atlantica (strain T6c / ATCC BAA-1087).